Here is a 411-residue protein sequence, read N- to C-terminus: Putative odorant receptor 59c (411 aa).

The Cytoplasmic segment spans residues 1-46 (MTKFFFKRLQTAPLDQEVSSLDASDYYYRIAFFLGWTPPKGALLRW). The helical transmembrane segment at 47–67 (IYSLWTLTTMWLGIVYLPLGL) threads the bilayer. Over 68–86 (SLTYVKHFDRFTPTEFLTS) the chain is Extracellular. Residues 87–107 (LQVDINCIGNVIKSCVTYSQM) traverse the membrane as a helical segment. The Cytoplasmic portion of the chain corresponds to 108-139 (WRFRRMNELISSLDKRCVTTTQRRIFHKMVAR). A helical transmembrane segment spans residues 140-160 (VNLIVILFLSTYLGFCFLTLF). The Extracellular segment spans residues 161-185 (TSVFAGKAPWQLYNPLVDWRKGHWQ). Residues 186–206 (LWIASILEYCVVSIGTMQELM) form a helical membrane-spanning segment. The Cytoplasmic portion of the chain corresponds to 207-271 (SDTYAIVFIS…QIIRPILSIT (65 aa)). A helical transmembrane segment spans residues 272–292 (IFAQFMLVGIDLGLAAISILF). Topologically, residues 293–296 (FPNT) are extracellular. The helical transmembrane segment at 297-317 (IWTIMANVSFIVAICTESFPC) threads the bilayer. Residues 318–369 (CMLCEHLIEDSVHVSNALFHSNWITADRSYKSAVLYFLHRAQQPIQFTAGSI) are Cytoplasmic-facing. Residues 370–390 (FPISVQSNIAVAKFAFTIITI) traverse the membrane as a helical segment. At 391-411 (VNQMNLGEKFFSDRSNGDINP) the chain is on the extracellular side.

It belongs to the insect chemoreceptor superfamily. Heteromeric odorant receptor channel (TC 1.A.69) family. Or2a subfamily. In terms of assembly, interacts with Orco. Complexes exist early in the endomembrane system in olfactory sensory neurons (OSNs), coupling these complexes to the conserved ciliary trafficking pathway. As to expression, expressed in olfactory sensory neurons in the maxillary palp.

It localises to the cell membrane. Its function is as follows. Odorant receptor which mediates acceptance or avoidance behavior, depending on its substrates. The odorant receptor repertoire encodes a large collection of odor stimuli that vary widely in identity, intensity, and duration. May form a complex with Orco to form odorant-sensing units, providing sensitive and prolonged odorant signaling and calcium permeability. The protein is Putative odorant receptor 59c (Or59c) of Drosophila melanogaster (Fruit fly).